The sequence spans 150 residues: Nucleoside diphosphate kinase (150 aa).

Positions 9, 57, 85, 91, 102, and 112 each coordinate ATP. His-115 serves as the catalytic Pros-phosphohistidine intermediate.

Belongs to the NDK family. Mg(2+) serves as cofactor.

Its subcellular location is the cytoplasm. It catalyses the reaction a 2'-deoxyribonucleoside 5'-diphosphate + ATP = a 2'-deoxyribonucleoside 5'-triphosphate + ADP. The catalysed reaction is a ribonucleoside 5'-diphosphate + ATP = a ribonucleoside 5'-triphosphate + ADP. Functionally, major role in the synthesis of nucleoside triphosphates other than ATP. The ATP gamma phosphate is transferred to the NDP beta phosphate via a ping-pong mechanism, using a phosphorylated active-site intermediate. The sequence is that of Nucleoside diphosphate kinase from Methanoregula boonei (strain DSM 21154 / JCM 14090 / 6A8).